The chain runs to 331 residues: Syntaxin-43 (331 aa).

At 1–305 (MATRNRTLLF…KAERTQRQGG (305 aa)) the chain is on the cytoplasmic side. Disordered regions lie at residues 20 to 45 (VRAP…KSGL) and 59 to 80 (PNRS…GTIT). Residues 31–40 (TLTEHNSLTG) show a composition bias toward polar residues. Residues 124-154 (KEDQHQIETLTQEVTFLLKKSEKQLQRLSAA) are a coiled coil. The region spanning 235 to 297 (EEISIEREKE…DDGLKQLQKA (63 aa)) is the t-SNARE coiled-coil homology domain. Residues 306–326 (MVMCASVLVILCFIMLVLLIL) form a helical; Anchor for type IV membrane protein membrane-spanning segment. Topologically, residues 327-331 (KEILL) are vesicular.

Belongs to the syntaxin family. In terms of assembly, part of the t-SNARE complex. Expressed at low levels in roots, stems, flowers and leaves.

The protein resides in the golgi apparatus. It is found in the trans-Golgi network membrane. Its function is as follows. Contributes to the regulation of secretory and vacuolar transport pathways in the post-Golgi network, and to the maintenance of the Golgi apparatus and trans-Golgi network (TGN) morphologies. Vesicle trafficking protein that functions in the secretory pathway and mediates liposome fusion. Required for extracellular resistance responses to a fungal pathogen. Also involved in the protection of chloroplasts from salicylic acid-dependent biotic stress. The protein is Syntaxin-43 of Arabidopsis thaliana (Mouse-ear cress).